The primary structure comprises 424 residues: Kynurenine--oxoglutarate transaminase 1 (424 aa).

Position 36 (Gly-36) interacts with substrate. Lys-82 is modified (N6-succinyllysine). Substrate is bound at residue Asn-185. N6-(pyridoxal phosphate)lysine is present on Lys-247. A substrate-binding site is contributed by Arg-398. An N6-succinyllysine modification is found at Lys-413.

Belongs to the class-I pyridoxal-phosphate-dependent aminotransferase family. Homodimer. Pyridoxal 5'-phosphate is required as a cofactor.

It is found in the cytoplasm. Its subcellular location is the cytosol. The catalysed reaction is L-kynurenine + 2-oxoglutarate = kynurenate + L-glutamate + H2O. It catalyses the reaction 3-phenylpyruvate + L-glutamine = 2-oxoglutaramate + L-phenylalanine. The enzyme catalyses an S-substituted L-cysteine + H2O = a thiol + pyruvate + NH4(+). The protein operates within amino-acid degradation; L-kynurenine degradation; kynurenate from L-kynurenine: step 1/2. Its function is as follows. Catalyzes the irreversible transamination of the L-tryptophan metabolite L-kynurenine to form kynurenic acid (KA), an intermediate in the tryptophan catabolic pathway which is also a broad spectrum antagonist of the three ionotropic excitatory amino acid receptors among others. Metabolizes the cysteine conjugates of certain halogenated alkenes and alkanes to form reactive metabolites. Catalyzes the beta-elimination of S-conjugates and Se-conjugates of L-(seleno)cysteine, resulting in the cleavage of the C-S or C-Se bond. In Mus musculus (Mouse), this protein is Kynurenine--oxoglutarate transaminase 1 (Kyat1).